We begin with the raw amino-acid sequence, 366 residues long: Aminomethyltransferase (366 aa).

Belongs to the GcvT family. The glycine cleavage system is composed of four proteins: P, T, L and H.

It catalyses the reaction N(6)-[(R)-S(8)-aminomethyldihydrolipoyl]-L-lysyl-[protein] + (6S)-5,6,7,8-tetrahydrofolate = N(6)-[(R)-dihydrolipoyl]-L-lysyl-[protein] + (6R)-5,10-methylene-5,6,7,8-tetrahydrofolate + NH4(+). The glycine cleavage system catalyzes the degradation of glycine. The protein is Aminomethyltransferase of Bordetella pertussis (strain Tohama I / ATCC BAA-589 / NCTC 13251).